Here is a 151-residue protein sequence, read N- to C-terminus: Neuroglobin (151 aa).

The 149-residue stretch at Met1 to Asp149 folds into the Globin domain. Heme b contacts are provided by His64 and His96.

The protein belongs to the globin family. Monomer. Homodimer and homotetramer; disulfide-linked. Mainly monomeric but also detected as part of homodimers and homotetramers. Interacts with 14-3-3 proteins; regulates the phosphorylation of NGB. Could interact (ferrous form) with G-alpha(i) proteins (GTP-bound form). Phosphorylated during hypoxia by ERK1/ERK2. Phosphorylation regulates the heme pocket hexacoordination preventing the association of His-64 with the heme metal center. Thereby, promotes the access of dioxygen and nitrite to the heme and stimulates the nitrite reductase activity. Phosphorylation during hypoxia is stabilized by 14-3-3 proteins. As to expression, widely distributed throughout the adult brain, including cerebral cortex, hippocampus, thalamus, hypothalamus, olfactory bulb, and cerebellum.

It localises to the cytoplasm. The protein resides in the cytosol. It is found in the mitochondrion matrix. The catalysed reaction is Fe(III)-heme b-[protein] + nitric oxide + H2O = Fe(II)-heme b-[protein] + nitrite + 2 H(+). Its function is as follows. Monomeric globin with a bis-histidyl six-coordinate heme-iron atom through which it can bind dioxygen, carbon monoxide and nitric oxide. Could help transport oxygen and increase its availability to the metabolically active neuronal tissues, though its low quantity in tissues as well as its high affinity for dioxygen, which may limit its oxygen-releasing ability, argue against it. The ferrous/deoxygenated form exhibits a nitrite reductase activity and it could produce nitric oxide which in turn inhibits cellular respiration in response to hypoxia. In its ferrous/deoxygenated state, it may also exhibit GDI (Guanine nucleotide Dissociation Inhibitor) activity toward heterotrimeric G-alpha proteins, thereby regulating signal transduction to facilitate neuroprotective responses in the wake of hypoxia and associated oxidative stress. This chain is Neuroglobin, found in Rattus norvegicus (Rat).